We begin with the raw amino-acid sequence, 576 residues long: Sulfite reductase [NADPH] hemoprotein beta-component (576 aa).

[4Fe-4S] cluster contacts are provided by Cys439, Cys445, Cys485, and Cys489. Siroheme is bound at residue Cys489.

The protein belongs to the nitrite and sulfite reductase 4Fe-4S domain family. Alpha(8)-beta(8). The alpha component is a flavoprotein, the beta component is a hemoprotein. It depends on siroheme as a cofactor. [4Fe-4S] cluster serves as cofactor.

It carries out the reaction hydrogen sulfide + 3 NADP(+) + 3 H2O = sulfite + 3 NADPH + 4 H(+). Its pathway is sulfur metabolism; hydrogen sulfide biosynthesis; hydrogen sulfide from sulfite (NADPH route): step 1/1. In terms of biological role, component of the sulfite reductase complex that catalyzes the 6-electron reduction of sulfite to sulfide. This is one of several activities required for the biosynthesis of L-cysteine from sulfate. The protein is Sulfite reductase [NADPH] hemoprotein beta-component of Aliivibrio salmonicida (strain LFI1238) (Vibrio salmonicida (strain LFI1238)).